A 306-amino-acid chain; its full sequence is Myb family transcription factor MOF1 (306 aa).

The 61-residue stretch at 19 to 79 (RSKVPRLRWT…HLQMYRCSRL (61 aa)) folds into the HTH myb-type domain. A DNA-binding region (H-T-H motif) is located at residues 50 to 75 (PKLILQLMGVKGLTISHVKSHLQMYR).

As to quaternary structure, interacts with TPR1, TPR2 and TPR3. Expressed in roots, leaves, leaf sheaths, culms, panicles, lemmas, paleas, lodicules, stamens, and pistils.

The protein localises to the nucleus. Transcriptional repressor that plays a role in the regulation of organ identity and spikelet meristem determinacy. Interacts with the TPR corepressors to possibly repress the expression of downstream target genes. The protein is Myb family transcription factor MOF1 of Oryza sativa subsp. japonica (Rice).